Reading from the N-terminus, the 265-residue chain is uncharacterized protein (265 aa).

A signal peptide spans 1–22; that stretch reads MGYFKRVLLYIIVMVLSVFIIG. Cys23 carries N-palmitoyl cysteine lipidation. The S-diacylglycerol cysteine moiety is linked to residue Cys23.

It belongs to the staphylococcal tandem lipoprotein family.

The protein resides in the cell membrane. This is an uncharacterized protein from Staphylococcus aureus (strain MSSA476).